Here is a 775-residue protein sequence, read N- to C-terminus: tRNA(Met) cytidine acetyltransferase TmcA (775 aa).

Disordered regions lie at residues 1-33 and 191-215; these read MPTTVSGPIKSVPGERRDRQVHTGASATTGMDI and TVEQDGLTDPPPSRPVPSPTPPTDA. A compositionally biased stretch (pro residues) spans 199–212; the sequence is DPPPSRPVPSPTPP. ATP contacts are provided by residues Q230, 254–263, and R403; that span reads GRGKSSAAGL. The N-acetyltransferase domain occupies 438–623; that stretch reads VEYRQLSAAD…YSVVMLDPCS (186 aa). Acetyl-CoA-binding positions include 549-551, 556-562, and E588; these read IAT and RSRGLGS.

It belongs to the RNA cytidine acetyltransferase family. TmcA subfamily.

Its subcellular location is the cytoplasm. The catalysed reaction is cytidine(34) in elongator tRNA(Met) + acetyl-CoA + ATP + H2O = N(4)-acetylcytidine(34) in elongator tRNA(Met) + ADP + phosphate + CoA + H(+). Catalyzes the formation of N(4)-acetylcytidine (ac(4)C) at the wobble position of tRNA(Met), by using acetyl-CoA as an acetyl donor and ATP (or GTP). This is tRNA(Met) cytidine acetyltransferase TmcA from Haloarcula marismortui (strain ATCC 43049 / DSM 3752 / JCM 8966 / VKM B-1809) (Halobacterium marismortui).